We begin with the raw amino-acid sequence, 345 residues long: MKVALLMSGGVDSSYCAHLLSSQGYEVIGIYLKLHDKNKKHDIYIANCEQVAAHLHIDFQVLDLREEFKKSVYDTFVSSYKEGKTPNPCAICNPLMKFGLGLQKALELGCDYIATGHYAQIKEVNGIKRIAKAVDESKDQSYFLYALPQEAIDRIIFPLGALLKEDIKKTALELLPFLGTLQTYKESQEICFVEQSYIDILKLHDKVDNEGVVRNSNGKAIGTHKGYMHYTIGKRKGFSVFGSHEPHYVKAINPQNNEIVVGTKEELAIDSIKALNKSLPQAFNGGIYDVKVRYRSTPLKAQIDIQGEFIYAKLLESAYGVAQGQALVLYQEDCVLGGGVITQAQ.

Residues 6 to 13 (LMSGGVDS) and Leu32 contribute to the ATP site. The active-site Nucleophile is Cys92. Cys92 and Cys191 are joined by a disulfide. Gly116 contributes to the ATP binding site. Residues 138 to 140 (KDQ) form an interaction with tRNA region. Cys191 functions as the Cysteine persulfide intermediate in the catalytic mechanism. The interval 293–294 (RY) is interaction with tRNA.

The protein belongs to the MnmA/TRMU family.

The protein localises to the cytoplasm. It carries out the reaction S-sulfanyl-L-cysteinyl-[protein] + uridine(34) in tRNA + AH2 + ATP = 2-thiouridine(34) in tRNA + L-cysteinyl-[protein] + A + AMP + diphosphate + H(+). Its function is as follows. Catalyzes the 2-thiolation of uridine at the wobble position (U34) of tRNA, leading to the formation of s(2)U34. This is tRNA-specific 2-thiouridylase MnmA from Helicobacter hepaticus (strain ATCC 51449 / 3B1).